The sequence spans 468 residues: Glutamate--tRNA ligase 2 (468 aa).

The short motif at 11-21 (PSPTGFLHIGG) is the 'HIGH' region element. The 'KMSKS' region signature appears at 239-243 (KLSKR). An ATP-binding site is contributed by K242.

Belongs to the class-I aminoacyl-tRNA synthetase family. Glutamate--tRNA ligase type 1 subfamily. Monomer.

The protein resides in the cytoplasm. It carries out the reaction tRNA(Glu) + L-glutamate + ATP = L-glutamyl-tRNA(Glu) + AMP + diphosphate. Its function is as follows. Catalyzes the attachment of glutamate to tRNA(Glu) in a two-step reaction: glutamate is first activated by ATP to form Glu-AMP and then transferred to the acceptor end of tRNA(Glu). This Ruegeria pomeroyi (strain ATCC 700808 / DSM 15171 / DSS-3) (Silicibacter pomeroyi) protein is Glutamate--tRNA ligase 2.